The chain runs to 106 residues: Large ribosomal subunit protein uL24 (106 aa).

Belongs to the universal ribosomal protein uL24 family. Part of the 50S ribosomal subunit.

Functionally, one of two assembly initiator proteins, it binds directly to the 5'-end of the 23S rRNA, where it nucleates assembly of the 50S subunit. Its function is as follows. One of the proteins that surrounds the polypeptide exit tunnel on the outside of the subunit. This Albidiferax ferrireducens (strain ATCC BAA-621 / DSM 15236 / T118) (Rhodoferax ferrireducens) protein is Large ribosomal subunit protein uL24.